Reading from the N-terminus, the 838-residue chain is Leucine--tRNA ligase (838 aa).

Positions 36 to 46 (PYPSGKIHMGH) match the 'HIGH' region motif. A 'KMSKS' region motif is present at residues 611 to 615 (KMSKS). Residue K614 participates in ATP binding.

It belongs to the class-I aminoacyl-tRNA synthetase family.

The protein resides in the cytoplasm. The enzyme catalyses tRNA(Leu) + L-leucine + ATP = L-leucyl-tRNA(Leu) + AMP + diphosphate. In Wolbachia sp. subsp. Drosophila simulans (strain wRi), this protein is Leucine--tRNA ligase.